The chain runs to 420 residues: 4-hydroxy-3-methylbut-2-en-1-yl diphosphate synthase (flavodoxin) (420 aa).

Residues C307, C310, C353, and E360 each coordinate [4Fe-4S] cluster.

Belongs to the IspG family. It depends on [4Fe-4S] cluster as a cofactor.

The catalysed reaction is (2E)-4-hydroxy-3-methylbut-2-enyl diphosphate + oxidized [flavodoxin] + H2O + 2 H(+) = 2-C-methyl-D-erythritol 2,4-cyclic diphosphate + reduced [flavodoxin]. The protein operates within isoprenoid biosynthesis; isopentenyl diphosphate biosynthesis via DXP pathway; isopentenyl diphosphate from 1-deoxy-D-xylulose 5-phosphate: step 5/6. Functionally, converts 2C-methyl-D-erythritol 2,4-cyclodiphosphate (ME-2,4cPP) into 1-hydroxy-2-methyl-2-(E)-butenyl 4-diphosphate. This chain is 4-hydroxy-3-methylbut-2-en-1-yl diphosphate synthase (flavodoxin), found in Brucella suis (strain ATCC 23445 / NCTC 10510).